The following is a 214-amino-acid chain: Thymidylate kinase (214 aa).

ATP is bound at residue 10–17 (GGEGVGKT).

The protein belongs to the thymidylate kinase family.

The enzyme catalyses dTMP + ATP = dTDP + ADP. In terms of biological role, phosphorylation of dTMP to form dTDP in both de novo and salvage pathways of dTTP synthesis. This Bartonella quintana (strain Toulouse) (Rochalimaea quintana) protein is Thymidylate kinase.